We begin with the raw amino-acid sequence, 188 residues long: dCTP deaminase (188 aa).

DCTP-binding positions include 111–116 (KSTYAR), 135–137 (TLE), Q156, Y170, K179, and Q180. E137 acts as the Proton donor/acceptor in catalysis.

Belongs to the dCTP deaminase family. As to quaternary structure, homotrimer.

It catalyses the reaction dCTP + H2O + H(+) = dUTP + NH4(+). The protein operates within pyrimidine metabolism; dUMP biosynthesis; dUMP from dCTP (dUTP route): step 1/2. In terms of biological role, catalyzes the deamination of dCTP to dUTP. The protein is dCTP deaminase of Rickettsia typhi (strain ATCC VR-144 / Wilmington).